A 96-amino-acid polypeptide reads, in one-letter code: MSLTPEQVRQVAHLARLKLDEDEMERMRLQLSSILDHIEMLQAIDVTDVPITAQVTDLTNVTRIDAVTSSLPVDAALANAPDRQGDYFRVKAVFEE.

The protein belongs to the GatC family. As to quaternary structure, heterotrimer of A, B and C subunits.

It catalyses the reaction L-glutamyl-tRNA(Gln) + L-glutamine + ATP + H2O = L-glutaminyl-tRNA(Gln) + L-glutamate + ADP + phosphate + H(+). It carries out the reaction L-aspartyl-tRNA(Asn) + L-glutamine + ATP + H2O = L-asparaginyl-tRNA(Asn) + L-glutamate + ADP + phosphate + 2 H(+). Its function is as follows. Allows the formation of correctly charged Asn-tRNA(Asn) or Gln-tRNA(Gln) through the transamidation of misacylated Asp-tRNA(Asn) or Glu-tRNA(Gln) in organisms which lack either or both of asparaginyl-tRNA or glutaminyl-tRNA synthetases. The reaction takes place in the presence of glutamine and ATP through an activated phospho-Asp-tRNA(Asn) or phospho-Glu-tRNA(Gln). The chain is Aspartyl/glutamyl-tRNA(Asn/Gln) amidotransferase subunit C from Herpetosiphon aurantiacus (strain ATCC 23779 / DSM 785 / 114-95).